Reading from the N-terminus, the 364-residue chain is Protein FAM81A (364 aa).

Coiled-coil stretches lie at residues 75–107 (FLEE…RDNI), 158–189 (NKEQ…VDLS), and 261–287 (ANER…QKRN). Residues 281–300 (EESQKRNAEGQRKPDEEKVH) are disordered.

This sequence belongs to the FAM81 family. In terms of assembly, interacts with DLG4/PSD-95, GRIN2B/GLUN2B and SYNGAP1; the interactions facilitate condensate formation. In terms of tissue distribution, expressed in most regions of the brain (at protein level).

The protein resides in the postsynaptic density. The protein localises to the cytoplasm. Functionally, facilitates the interaction and assembly of proteins within the postsynaptic density by promoting the condensation of postsynaptic proteins via liquid-liquid phase separation. Required for neuronal activity. Accumulation at the postsynaptic density results in enlargement of dendritic spines. This is Protein FAM81A (Fam81a) from Mus musculus (Mouse).